Here is a 141-residue protein sequence, read N- to C-terminus: ATP synthase epsilon chain (141 aa).

Belongs to the ATPase epsilon chain family. In terms of assembly, F-type ATPases have 2 components, CF(1) - the catalytic core - and CF(0) - the membrane proton channel. CF(1) has five subunits: alpha(3), beta(3), gamma(1), delta(1), epsilon(1). CF(0) has three main subunits: a, b and c.

It localises to the cell inner membrane. Produces ATP from ADP in the presence of a proton gradient across the membrane. This Burkholderia cenocepacia (strain ATCC BAA-245 / DSM 16553 / LMG 16656 / NCTC 13227 / J2315 / CF5610) (Burkholderia cepacia (strain J2315)) protein is ATP synthase epsilon chain.